The sequence spans 101 residues: DNA-directed RNA polymerase subunit omega (101 aa).

The segment covering 1–13 (MSSTPAAASATPS) has biased composition (low complexity). The segment at 1–22 (MSSTPAAASATPSHGALPAYDT) is disordered.

It belongs to the RNA polymerase subunit omega family. The RNAP catalytic core consists of 2 alpha, 1 beta, 1 beta' and 1 omega subunit. When a sigma factor is associated with the core the holoenzyme is formed, which can initiate transcription.

The enzyme catalyses RNA(n) + a ribonucleoside 5'-triphosphate = RNA(n+1) + diphosphate. In terms of biological role, promotes RNA polymerase assembly. Latches the N- and C-terminal regions of the beta' subunit thereby facilitating its interaction with the beta and alpha subunits. The polypeptide is DNA-directed RNA polymerase subunit omega (Rhodococcus jostii (strain RHA1)).